Consider the following 217-residue polypeptide: Small ribosomal subunit protein uS3 (217 aa).

The 71-residue stretch at 40–110 (IRDLINKGFN…EVYINIHEVR (71 aa)) folds into the KH type-2 domain.

This sequence belongs to the universal ribosomal protein uS3 family. In terms of assembly, part of the 30S ribosomal subunit. Forms a tight complex with proteins S10 and S14.

Binds the lower part of the 30S subunit head. Binds mRNA in the 70S ribosome, positioning it for translation. The chain is Small ribosomal subunit protein uS3 from Rickettsia africae (strain ESF-5).